Reading from the N-terminus, the 460-residue chain is MKNEMWSGRFSGASDELLKEFNASLNVDKTLFNEDIQGSIAHATMLESCGILKKEELDAIIKGLEQVRSEIEQGKFVFDIKDEDIHMAIEKRLSEIIGSEIGGRLHTARSRNDQVATDFKLFVKKSHIELIKLLKELIQTMLKHAKAHKKTIMPSFTHLQHAQPVSFSFYILAYAFMLMRDIKRLQNSLELADFSPLGSCACAGTSYATNRELSAKILGFKDIMSNAMDGVSDRDFALDLLYDIAVIFTHTSRLCEEMILFSSSEFSFITISDSFSTGSSIMPQKKNPDVCELIRGKTGRVYGNLISLLTIMKALPLAYNKDMQEDKEGIFDSVKTAKDSLIILNAMLKEIQINKENMLNACKKGHMLATDLADYLVREKNIPFRKAHFIVGNVVAQAEAQGIDISEIKDLSKIDPVFDEKAMELLNFEFSLNSKQSEGSSSIASVEKQIQILEGFIQNL.

Belongs to the lyase 1 family. Argininosuccinate lyase subfamily.

The protein resides in the cytoplasm. It carries out the reaction 2-(N(omega)-L-arginino)succinate = fumarate + L-arginine. It participates in amino-acid biosynthesis; L-arginine biosynthesis; L-arginine from L-ornithine and carbamoyl phosphate: step 3/3. In Campylobacter jejuni (strain RM1221), this protein is Argininosuccinate lyase.